We begin with the raw amino-acid sequence, 492 residues long: MAREEQNIENRGSVHVVERESNLRSVVCGPVRWLKMLASKLHWSYVFAVVSNCGINQGFGYSLGHVATDYYMKDVQKVQPSQYQALSAITRISWIIFKPLFGILTDVLPIFGFHRRPYFILAGVIGVVSLLFISLQSNLHLYLALFWMTISSAAMAIADVTIDACTTYNSNKHPSLASDMQSLCSLSYSIGELLGFFMSGILVHLVGSKGVFGLLTFTFALVSVVGVLFSEPRVHGFSFKQNFTNAMKAMWRTIKCSDVWQPSLYMFITRALGLDIKEGLFYWFTDSKDGPLFAQETVGFILSIGSIGSILGVLLYNLRLKDHPFRKLFLWTQLLFALSGMFDLILVLRLNLKFGLPDYLFIVVDGIVSKMIIRLTWMVIFVLNTKLCPHGIEGTFFALLMSIDNAGLMTSSWLGGKMLHVLKVTRTEFGNLWLAVLVRNVMRLLPICFLFLVPQGDQNTFKLPAEIMGEDSEEEGTRNLELASLVDYVDRS.

12 consecutive transmembrane segments (helical) span residues 46-66 (VFAVVSNCGINQGFGYSLGHV), 92-112 (ISWIIFKPLFGILTDVLPIFG), 117-137 (PYFILAGVIGVVSLLFISLQS), 142-162 (YLALFWMTISSAAMAIADVTI), 186-206 (LSYSIGELLGFFMSGILVHLV), 210-230 (GVFGLLTFTFALVSVVGVLFS), 264-285 (LYMFITRALGLDIKEGLFYWFT), 298-318 (VGFILSIGSIGSILGVLLYNL), 328-348 (LFLWTQLLFALSGMFDLILVL), 361-381 (FIVVDGIVSKMIIRLTWMVIF), 396-416 (FFALLMSIDNAGLMTSSWLGG), and 433-453 (WLAVLVRNVMRLLPICFLFLV).

It belongs to the major facilitator superfamily. Folate-biopterin transporter (TC 2.A.71) family.

It localises to the membrane. Could mediate folate transport. The chain is Probable folate-biopterin transporter 5 from Arabidopsis thaliana (Mouse-ear cress).